Here is a 341-residue protein sequence, read N- to C-terminus: Protein pelota homolog (341 aa).

It belongs to the eukaryotic release factor 1 family. Pelota subfamily. Monomer. It depends on a divalent metal cation as a cofactor.

The protein localises to the cytoplasm. May function in recognizing stalled ribosomes, interact with stem-loop structures in stalled mRNA molecules, and effect endonucleolytic cleavage of the mRNA. May play a role in the release non-functional ribosomes and degradation of damaged mRNAs. Has endoribonuclease activity. The protein is Protein pelota homolog of Metallosphaera sedula (strain ATCC 51363 / DSM 5348 / JCM 9185 / NBRC 15509 / TH2).